A 147-amino-acid chain; its full sequence is 3-dehydroquinate dehydratase (147 aa).

Residue Tyr-23 is the Proton acceptor of the active site. Asn-75, His-81, and Asp-88 together coordinate substrate. Catalysis depends on His-101, which acts as the Proton donor. Residues 102 to 103 and Arg-112 each bind substrate; that span reads LS.

It belongs to the type-II 3-dehydroquinase family. Homododecamer.

It carries out the reaction 3-dehydroquinate = 3-dehydroshikimate + H2O. The protein operates within metabolic intermediate biosynthesis; chorismate biosynthesis; chorismate from D-erythrose 4-phosphate and phosphoenolpyruvate: step 3/7. Its function is as follows. Catalyzes a trans-dehydration via an enolate intermediate. The polypeptide is 3-dehydroquinate dehydratase (Hahella chejuensis (strain KCTC 2396)).